The sequence spans 84 residues: UPF0320 protein YNR077C (84 aa).

It belongs to the UPF0320 family.

In Saccharomyces cerevisiae (strain ATCC 204508 / S288c) (Baker's yeast), this protein is UPF0320 protein YNR077C.